The following is a 935-amino-acid chain: DNA repair protein rev1 (935 aa).

Positions 59–147 (SKSDLFHGLA…KILPWINYRT (89 aa)) constitute a BRCT domain. The segment covering 162-178 (SKPSQPEGNLEDIQTSS) has biased composition (polar residues). The segment at 162 to 193 (SKPSQPEGNLEDIQTSSQEEEHDNEKDKTKES) is disordered. Residues 184–193 (DNEKDKTKES) show a composition bias toward basic and acidic residues. The segment at 235–245 (FFSSSRLHHLS) is interaction with target DNA. DCTP is bound by residues R240 and 283–287 (DFDCF). Residues 279–460 (LLHVDFDCFF…LSVQDLPGVG (182 aa)) enclose the UmuC domain. 2 residues coordinate Mg(2+): D283 and F284. The segment at 310–312 (IKN) is interaction with target DNA. Residues 317–323 (SCNYEAR), N329, and D378 contribute to the dCTP site. Mg(2+) is bound by residues D378 and E379. 2 interaction with target DNA regions span residues 460–463 (GSSQ) and 517–525 (RRSISVDVN).

This sequence belongs to the DNA polymerase type-Y family. The cofactor is Mg(2+).

The protein resides in the nucleus. The protein localises to the nucleolus. It is found in the mitochondrion. It localises to the cytoplasm. Its subcellular location is the cytoskeleton. The protein resides in the spindle. Its function is as follows. Deoxycytidyl transferase involved in DNA repair. Transfers a dCMP residue from dCTP to the 3'-end of a DNA primer in a template-dependent reaction. May assist in the first step in the bypass of abasic lesions by the insertion of a nucleotide opposite the lesion. Required for normal induction of mutations by physical and chemical agents. Involved in mitochondrial DNA mutagenesis. The protein is DNA repair protein rev1 of Schizosaccharomyces pombe (strain 972 / ATCC 24843) (Fission yeast).